A 351-amino-acid chain; its full sequence is Phospho-N-acetylmuramoyl-pentapeptide-transferase (351 aa).

Transmembrane regions (helical) follow at residues 17-37 (MAYATIFAFLLSLIVGPYIIL), 62-82 (GIPTMGGILIFFCVFISLVFW), 85-105 (ILNVYFLIMVFVMLGFAFLGF), 130-150 (IIFSFFSVGILYYFGGEHVSV), 158-178 (SFQIDLGLFYIPFGMFILISA), 190-210 (GLAIGLSIVITGALIIIAYLT), 230-250 (LVIFLGALLGGSFGFLWFNAY), 254-274 (IMMGDTGSLALGAILGMAALI), 279-299 (ILFSILAGVFIIETMSVIIQV), and 328-348 (QVVIRFWIIGLIFAIIALSTI).

It belongs to the glycosyltransferase 4 family. MraY subfamily. Mg(2+) serves as cofactor.

The protein localises to the cell inner membrane. It catalyses the reaction UDP-N-acetyl-alpha-D-muramoyl-L-alanyl-gamma-D-glutamyl-meso-2,6-diaminopimeloyl-D-alanyl-D-alanine + di-trans,octa-cis-undecaprenyl phosphate = di-trans,octa-cis-undecaprenyl diphospho-N-acetyl-alpha-D-muramoyl-L-alanyl-D-glutamyl-meso-2,6-diaminopimeloyl-D-alanyl-D-alanine + UMP. It participates in cell wall biogenesis; peptidoglycan biosynthesis. Catalyzes the initial step of the lipid cycle reactions in the biosynthesis of the cell wall peptidoglycan: transfers peptidoglycan precursor phospho-MurNAc-pentapeptide from UDP-MurNAc-pentapeptide onto the lipid carrier undecaprenyl phosphate, yielding undecaprenyl-pyrophosphoryl-MurNAc-pentapeptide, known as lipid I. The chain is Phospho-N-acetylmuramoyl-pentapeptide-transferase from Borreliella burgdorferi (strain ATCC 35210 / DSM 4680 / CIP 102532 / B31) (Borrelia burgdorferi).